The chain runs to 220 residues: Vesicle-associated membrane protein 7 (220 aa).

Ala2 carries the post-translational modification N-acetylalanine. Residues 2 to 188 (AILFAVVARG…ARAMCMKNLK (187 aa)) are Cytoplasmic-facing. The Longin domain occupies 7-110 (VVARGTTILA…AMNSEFSSVL (104 aa)). One can recognise a v-SNARE coiled-coil homology domain in the interval 125-185 (KVMETQAQVD…RNLARAMCMK (61 aa)). Phosphoserine is present on residues Ser167 and Ser168. The chain crosses the membrane as a helical; Anchor for type IV membrane protein span at residues 189-209 (LTIIIIIISVVFIYIIVSPLC). Residues 210-220 (GGFTWPNCVKK) lie on the Vesicular side of the membrane.

It belongs to the synaptobrevin family. As to quaternary structure, component of the SNARE complex composed of STX4, SNAP23 and VAMP7 that binds SYT7 during lysosomal exocytosis. Component of the SNARE complex composed of STX7, STX8, VAMP7 and VTI1B that is required for heterotypic fusion of late endosomes with lysosomes. May interact with STX17. Interacts with PICALM. Interacts with RAB21.

It localises to the cytoplasmic vesicle. The protein resides in the secretory vesicle membrane. The protein localises to the golgi apparatus. It is found in the trans-Golgi network membrane. Its subcellular location is the late endosome membrane. It localises to the lysosome membrane. The protein resides in the endoplasmic reticulum membrane. The protein localises to the phagosome membrane. It is found in the synapse. Its subcellular location is the synaptosome. Its function is as follows. Involved in the targeting and/or fusion of transport vesicles to their target membrane during transport of proteins from the early endosome to the lysosome. Required for heterotypic fusion of late endosomes with lysosomes and homotypic lysosomal fusion. Required for calcium regulated lysosomal exocytosis. Involved in the export of chylomicrons from the endoplasmic reticulum to the cis Golgi. Required for exocytosis of mediators during eosinophil and neutrophil degranulation, and target cell killing by natural killer cells. Required for focal exocytosis of late endocytic vesicles during phagosome formation. The sequence is that of Vesicle-associated membrane protein 7 (VAMP7) from Bos taurus (Bovine).